The following is a 348-amino-acid chain: Rhodopsin (348 aa).

M1 is subject to N-acetylmethionine. The Extracellular portion of the chain corresponds to 1–36 (MNGTEGPNFYVPFSNATGVVRSPFEYPQYYLAEPWQ). N2 and N15 each carry an N-linked (GlcNAc...) asparagine glycan. A helical transmembrane segment spans residues 37–61 (FSMLAAYMFLLIVLGFPINFLTLYV). Residues 62–73 (TVQHKKLRTPLN) lie on the Cytoplasmic side of the membrane. Residues 74 to 96 (YILLNLAVADLFMVFGGFTTTLY) form a helical membrane-spanning segment. The Extracellular segment spans residues 97–110 (TSLHGYFVFGPTGC). C110 and C187 are disulfide-bonded. A helical membrane pass occupies residues 111–133 (NLEGFFATLGGEIALWSLVVLAI). The 'Ionic lock' involved in activated form stabilization motif lies at 134–136 (ERY). Residues 134–152 (ERYVVICKPMSNFRFGENH) are Cytoplasmic-facing. Residues 153 to 173 (AIMGVVFTWIMALACAAPPLV) traverse the membrane as a helical segment. Over 174 to 202 (GWSRYIPEGMQCSCGVDYYTLKPEVNNES) the chain is Extracellular. E201 is a binding site for Zn(2+). The helical transmembrane segment at 203 to 224 (FVIYMFVVHFTIPLIVIFFCYG) threads the bilayer. Residues 225–252 (QLVFTVKEAAAQQQESATTQKAEKEVTR) are Cytoplasmic-facing. Residues 253–274 (MVILMVVFFLICWFPYAGVAFY) form a helical membrane-spanning segment. The Extracellular portion of the chain corresponds to 275 to 286 (IFTHQGSNFGPI). Zn(2+) is bound at residue Q279. A helical transmembrane segment spans residues 287 to 308 (FMTLPAFFAKSSSIYNPVIYIM). K296 carries the post-translational modification N6-(retinylidene)lysine. Residues 309–348 (MNKQFRNCMLTTLCCGKNILGDDEASATASKTETSQVAPA) are Cytoplasmic-facing. 2 S-palmitoyl cysteine lipidation sites follow: C322 and C323. The tract at residues 330-348 (DDEASATASKTETSQVAPA) is interaction with SAG. S334 carries the phosphoserine modification. T336 is modified (phosphothreonine). At S338 the chain carries Phosphoserine. 2 positions are modified to phosphothreonine: T340 and T342. S343 is modified (phosphoserine).

The protein belongs to the G-protein coupled receptor 1 family. Opsin subfamily. As to quaternary structure, homodimer. May form a complex composed of RHO, GRK1 and RCVRN in a Ca(2+)-dependent manner; RCVRN prevents the interaction between GRK1 and RHO. Interacts with GRK1. Interacts (phosphorylated form) with SAG. Interacts with GNAT1. Interacts with GNAT3. SAG and G-proteins compete for a common binding site. Interacts with PRCD; the interaction promotes PRCD stability. Forms a complex with ASAP1 and ARF4. Forms a complex with ASAP1, RAB11A, Rabin8/RAB3IP, ARF4 and RAB11FIP3; the complex regulates Golgi-to-cilia rhodopsin/RHO transport in photoreceptors. In terms of processing, phosphorylated on some or all of the serine and threonine residues present in the C-terminal region. Post-translationally, contains one covalently linked retinal chromophore. Upon light absorption, the covalently bound 11-cis-retinal is converted to all-trans-retinal. After hydrolysis of the Schiff base and release of the covalently bound all-trans-retinal, active rhodopsin is regenerated by binding of a fresh molecule of 11-cis-retinal.

The protein localises to the membrane. It localises to the cell projection. The protein resides in the cilium. It is found in the photoreceptor outer segment. Photoreceptor required for image-forming vision at low light intensity. Required for photoreceptor cell viability after birth. Light-induced isomerization of 11-cis to all-trans retinal triggers a conformational change that activates signaling via G-proteins. Subsequent receptor phosphorylation mediates displacement of the bound G-protein alpha subunit by the arrestin SAG and terminates signaling. This Cricetulus griseus (Chinese hamster) protein is Rhodopsin (RHO).